We begin with the raw amino-acid sequence, 149 residues long: Transcriptional regulator MraZ (149 aa).

SpoVT-AbrB domains follow at residues 6–52 (RSHR…PLPD) and 81–124 (AELM…DQGR).

This sequence belongs to the MraZ family. As to quaternary structure, forms oligomers.

The protein localises to the cytoplasm. Its subcellular location is the nucleoid. The sequence is that of Transcriptional regulator MraZ from Nitratidesulfovibrio vulgaris (strain DSM 19637 / Miyazaki F) (Desulfovibrio vulgaris).